The following is a 62-amino-acid chain: Large ribosomal subunit protein bL28 (62 aa).

The tract at residues 1-27 (MARKCVVTGRQTRSGNQRSHAMNSNKR) is disordered. Positions 9-26 (GRQTRSGNQRSHAMNSNK) are enriched in polar residues.

It belongs to the bacterial ribosomal protein bL28 family.

The protein is Large ribosomal subunit protein bL28 of Oceanobacillus iheyensis (strain DSM 14371 / CIP 107618 / JCM 11309 / KCTC 3954 / HTE831).